A 311-amino-acid chain; its full sequence is Putative S-adenosyl-L-methionine-dependent methyltransferase MSMEG_0095/MSMEI_0092 (311 aa).

Residues Asp-134 and Asp-163 to Leu-164 contribute to the S-adenosyl-L-methionine site.

The protein belongs to the UPF0677 family.

In terms of biological role, exhibits S-adenosyl-L-methionine-dependent methyltransferase activity. The chain is Putative S-adenosyl-L-methionine-dependent methyltransferase MSMEG_0095/MSMEI_0092 from Mycolicibacterium smegmatis (strain ATCC 700084 / mc(2)155) (Mycobacterium smegmatis).